We begin with the raw amino-acid sequence, 149 residues long: 3-dehydroquinate dehydratase (149 aa).

The active-site Proton acceptor is Tyr26. Substrate is bound by residues Asn77, His83, and Asp90. The active-site Proton donor is His103. Residues 104 to 105 (LS) and Arg114 contribute to the substrate site.

This sequence belongs to the type-II 3-dehydroquinase family. Homododecamer.

It carries out the reaction 3-dehydroquinate = 3-dehydroshikimate + H2O. The protein operates within metabolic intermediate biosynthesis; chorismate biosynthesis; chorismate from D-erythrose 4-phosphate and phosphoenolpyruvate: step 3/7. Functionally, catalyzes a trans-dehydration via an enolate intermediate. The chain is 3-dehydroquinate dehydratase from Aeromonas hydrophila subsp. hydrophila (strain ATCC 7966 / DSM 30187 / BCRC 13018 / CCUG 14551 / JCM 1027 / KCTC 2358 / NCIMB 9240 / NCTC 8049).